We begin with the raw amino-acid sequence, 442 residues long: tRNA modification GTPase MnmE (442 aa).

Residues arginine 27, glutamate 84, and lysine 124 each contribute to the (6S)-5-formyl-5,6,7,8-tetrahydrofolate site. In terms of domain architecture, TrmE-type G spans 221-366; that stretch reads GLHVVIVGAP…LLDALQAFAE (146 aa). GTP contacts are provided by residues 231 to 236, 250 to 256, and 275 to 278; these read NAGKSS, SEEAGTT, and DTAG. Positions 235 and 256 each coordinate Mg(2+). (6S)-5-formyl-5,6,7,8-tetrahydrofolate is bound at residue lysine 442.

The protein belongs to the TRAFAC class TrmE-Era-EngA-EngB-Septin-like GTPase superfamily. TrmE GTPase family. As to quaternary structure, homodimer. Heterotetramer of two MnmE and two MnmG subunits. It depends on K(+) as a cofactor.

It localises to the cytoplasm. Exhibits a very high intrinsic GTPase hydrolysis rate. Involved in the addition of a carboxymethylaminomethyl (cmnm) group at the wobble position (U34) of certain tRNAs, forming tRNA-cmnm(5)s(2)U34. The protein is tRNA modification GTPase MnmE of Brucella abortus (strain 2308).